A 2207-amino-acid polypeptide reads, in one-letter code: DNA polymerase epsilon catalytic subunit A (2207 aa).

Disordered regions lie at residues 1–20, 1201–1233, and 1934–1961; these read MPSR…AASF, SMEK…PFAS, and RPES…ENEE. Zn(2+)-binding residues include Cys2075, Cys2078, Cys2113, and Cys2116. The CysA-type zinc-finger motif lies at 2075-2116; the sequence is CSACCLIRDLDLCRDEDVLPERGSGSGPDSATSSRPWCCPFC. Positions 2147, 2150, 2162, and 2164 each coordinate [4Fe-4S] cluster. Positions 2147–2164 match the CysB motif motif; it reads CSKCGTLKISEFMEHCSC.

This sequence belongs to the DNA polymerase type-B family. As to quaternary structure, heterotetramer. Consists of 4 subunits: pol2, dpb2, dpb3 and dpb4. It depends on [4Fe-4S] cluster as a cofactor.

It is found in the nucleus. The catalysed reaction is DNA(n) + a 2'-deoxyribonucleoside 5'-triphosphate = DNA(n+1) + diphosphate. DNA polymerase II participates in chromosomal DNA replication. This chain is DNA polymerase epsilon catalytic subunit A (pol2), found in Emericella nidulans (strain FGSC A4 / ATCC 38163 / CBS 112.46 / NRRL 194 / M139) (Aspergillus nidulans).